The following is a 430-amino-acid chain: MANVVVVGAQWGDEGKGKIVDWLSERADVIARFQGGHNAGHTLVIDGKVYKLSLLPSGIVRPGKLSVIGNGVVLDPWHLVQEIAKLRADGVEISPESLMIAENAVLILPLHGELDRARESQNSVAKIGTTGRGIGPAYEDKVGRRAIRVADLADEATLALRVDRLMVHHDALRRGLGIEPVDREALLTQLREIAPQVLPYAKPVWKVMNEMRKAGKRILFEGAQGALLDIDFGTYPYVTSSNVIAGQAATGTGIGPGAIGFVLGIVKAYTTRVGEGPFPAELQDADGERLGERGREFGTVTGRKRRCGWFDAVLVRQTCATSGVSGIALTKLDVLDGFETLKICVGYELDGERLDHLPIAADQQARCTPIFEELEGWSESTAGARSWADLPGAAVKYVRRIEELIQCPVALLSTSPERDDTILVTDPFED.

GTP contacts are provided by residues 12 to 18 and 40 to 42; these read GDEGKGK and GHT. Catalysis depends on aspartate 13, which acts as the Proton acceptor. Aspartate 13 and glycine 40 together coordinate Mg(2+). Residues 13-16, 38-41, threonine 130, arginine 144, glutamine 224, threonine 239, and arginine 303 each bind IMP; these read DEGK and NAGH. Histidine 41 (proton donor) is an active-site residue. 299-305 lines the substrate pocket; sequence TVTGRKR. GTP contacts are provided by residues arginine 305, 331 to 333, and 413 to 415; these read KLD and STS.

Belongs to the adenylosuccinate synthetase family. In terms of assembly, homodimer. Requires Mg(2+) as cofactor.

It localises to the cytoplasm. The enzyme catalyses IMP + L-aspartate + GTP = N(6)-(1,2-dicarboxyethyl)-AMP + GDP + phosphate + 2 H(+). It participates in purine metabolism; AMP biosynthesis via de novo pathway; AMP from IMP: step 1/2. Its function is as follows. Plays an important role in the de novo pathway of purine nucleotide biosynthesis. Catalyzes the first committed step in the biosynthesis of AMP from IMP. The chain is Adenylosuccinate synthetase from Cereibacter sphaeroides (strain ATCC 17029 / ATH 2.4.9) (Rhodobacter sphaeroides).